We begin with the raw amino-acid sequence, 322 residues long: NAD(P)H-dependent D-xylose reductase (322 aa).

Tyr-52 (proton donor) is an active-site residue. Substrate is bound at residue His-114. NAD(+) is bound by residues 169 to 170 (SN), 218 to 227 (SSFGPQSFVE), and 274 to 284 (KSNLPERLVQN).

Belongs to the aldo/keto reductase family. In terms of assembly, homodimer.

It catalyses the reaction xylitol + NAD(+) = D-xylose + NADH + H(+). The enzyme catalyses xylitol + NADP(+) = D-xylose + NADPH + H(+). Its pathway is carbohydrate metabolism; D-xylose degradation. Its function is as follows. Reduces D-xylose into xylitol. Has a preference for NADPH, but can also utilize NADH as cosubstrate. The protein is NAD(P)H-dependent D-xylose reductase (XYL1) of Candida tenuis (Yeast).